A 293-amino-acid chain; its full sequence is Nitrogenase iron protein (293 aa).

10-17 (GKGGIGKS) serves as a coordination point for ATP. Cys-98 contributes to the [4Fe-4S] cluster binding site. ADP-ribosylarginine; by dinitrogenase reductase ADP-ribosyltransferase is present on Arg-101. Residue Cys-133 participates in [4Fe-4S] cluster binding.

The protein belongs to the NifH/BchL/ChlL family. Homodimer. Requires [4Fe-4S] cluster as cofactor. Post-translationally, the reversible ADP-ribosylation of Arg-101 inactivates the nitrogenase reductase and regulates nitrogenase activity.

The catalysed reaction is N2 + 8 reduced [2Fe-2S]-[ferredoxin] + 16 ATP + 16 H2O = H2 + 8 oxidized [2Fe-2S]-[ferredoxin] + 2 NH4(+) + 16 ADP + 16 phosphate + 6 H(+). Functionally, the key enzymatic reactions in nitrogen fixation are catalyzed by the nitrogenase complex, which has 2 components: the iron protein and the molybdenum-iron protein. The sequence is that of Nitrogenase iron protein from Pectobacterium atrosepticum (strain SCRI 1043 / ATCC BAA-672) (Erwinia carotovora subsp. atroseptica).